The primary structure comprises 597 residues: Alkyldihydroxyacetonephosphate synthase (597 aa).

Residues 131–313 enclose the FAD-binding PCMH-type domain; it reads IPRLPDIVVW…SEVTIKIFPI (183 aa). Residues 163 to 169, 232 to 238, 245 to 248, and 297 to 303 contribute to the FAD site; these read PIGGGTS, DSIEFST, TRAS, and EGTLGVV. Arg-444 serves as a coordination point for substrate. Tyr-507 serves as the catalytic Proton donor/acceptor. The segment at 544–546 is important for enzyme activity; that stretch reads HHH. Residues 595 to 597 carry the Microbody targeting signal motif; the sequence is CKL.

This sequence belongs to the FAD-binding oxidoreductase/transferase type 4 family. Homodimer. It depends on FAD as a cofactor.

It is found in the peroxisome. The enzyme catalyses a long chain fatty alcohol + a 1-acylglycerone 3-phosphate = a 1-O-alkylglycerone 3-phosphate + a long-chain fatty acid + H(+). It participates in glycerolipid metabolism; ether lipid biosynthesis. Functionally, catalyzes the exchange of an acyl for a long-chain alkyl group and the formation of the ether bond in the biosynthesis of ether phospholipids. This chain is Alkyldihydroxyacetonephosphate synthase (ads-1), found in Caenorhabditis elegans.